The sequence spans 593 residues: Aspartate--tRNA ligase (593 aa).

Position 180 (E180) interacts with L-aspartate. The tract at residues 204-207 (QIFK) is aspartate. R226 is an L-aspartate binding site. Residues 226 to 228 (RDE) and Q235 each bind ATP. H453 contacts L-aspartate. E487 contributes to the ATP binding site. R494 is an L-aspartate binding site. 539 to 542 (GLDR) serves as a coordination point for ATP.

Belongs to the class-II aminoacyl-tRNA synthetase family. Type 1 subfamily. As to quaternary structure, homodimer.

It localises to the cytoplasm. It catalyses the reaction tRNA(Asp) + L-aspartate + ATP = L-aspartyl-tRNA(Asp) + AMP + diphosphate. In terms of biological role, catalyzes the attachment of L-aspartate to tRNA(Asp) in a two-step reaction: L-aspartate is first activated by ATP to form Asp-AMP and then transferred to the acceptor end of tRNA(Asp). This Clostridium botulinum (strain ATCC 19397 / Type A) protein is Aspartate--tRNA ligase.